The sequence spans 211 residues: Ribosomal RNA small subunit methyltransferase G (211 aa).

Residues glycine 76, leucine 81, 127–128, and arginine 142 each bind S-adenosyl-L-methionine; that span reads VE.

This sequence belongs to the methyltransferase superfamily. RNA methyltransferase RsmG family.

The protein localises to the cytoplasm. It catalyses the reaction guanosine(527) in 16S rRNA + S-adenosyl-L-methionine = N(7)-methylguanosine(527) in 16S rRNA + S-adenosyl-L-homocysteine. Its function is as follows. Specifically methylates the N7 position of guanine in position 527 of 16S rRNA. The polypeptide is Ribosomal RNA small subunit methyltransferase G (Vibrio vulnificus (strain CMCP6)).